A 275-amino-acid polypeptide reads, in one-letter code: Large ribosomal subunit protein uL2 (275 aa).

The segment at 208-275 (AGAKRWRGRR…NMIIRDRRKK (68 aa)) is disordered. Composition is skewed to basic residues over residues 209–219 (GAKRWRGRRPT) and 254–263 (KGYKTRRNKR).

Belongs to the universal ribosomal protein uL2 family. As to quaternary structure, part of the 50S ribosomal subunit. Forms a bridge to the 30S subunit in the 70S ribosome.

Its function is as follows. One of the primary rRNA binding proteins. Required for association of the 30S and 50S subunits to form the 70S ribosome, for tRNA binding and peptide bond formation. It has been suggested to have peptidyltransferase activity; this is somewhat controversial. Makes several contacts with the 16S rRNA in the 70S ribosome. In Coxiella burnetii (strain CbuG_Q212) (Coxiella burnetii (strain Q212)), this protein is Large ribosomal subunit protein uL2.